Consider the following 163-residue polypeptide: Protein-export protein SecB (163 aa).

This sequence belongs to the SecB family. Homotetramer, a dimer of dimers. One homotetramer interacts with 1 SecA dimer.

It is found in the cytoplasm. In terms of biological role, one of the proteins required for the normal export of preproteins out of the cell cytoplasm. It is a molecular chaperone that binds to a subset of precursor proteins, maintaining them in a translocation-competent state. It also specifically binds to its receptor SecA. This Burkholderia cenocepacia (strain ATCC BAA-245 / DSM 16553 / LMG 16656 / NCTC 13227 / J2315 / CF5610) (Burkholderia cepacia (strain J2315)) protein is Protein-export protein SecB.